The following is a 394-amino-acid chain: Chalcone synthase (394 aa).

Residue Cys-168 is part of the active site.

It belongs to the thiolase-like superfamily. Chalcone/stilbene synthases family.

It carries out the reaction (E)-4-coumaroyl-CoA + 3 malonyl-CoA + 3 H(+) = 2',4,4',6'-tetrahydroxychalcone + 3 CO2 + 4 CoA. It functions in the pathway secondary metabolite biosynthesis; flavonoid biosynthesis. Its function is as follows. The primary product of this enzyme is 4,2',4',6'-tetrahydroxychalcone (also termed naringenin-chalcone or chalcone) which can under specific conditions spontaneously isomerize into naringenin. The chain is Chalcone synthase (CHS) from Raphanus sativus (Radish).